A 99-amino-acid chain; its full sequence is UPF0751 protein BCAH820_B0138 (99 aa).

It belongs to the UPF0751 family.

The polypeptide is UPF0751 protein BCAH820_B0138 (Bacillus cereus (strain AH820)).